We begin with the raw amino-acid sequence, 105 residues long: Met repressor (105 aa).

Belongs to the MetJ family. In terms of assembly, homodimer.

It is found in the cytoplasm. In terms of biological role, this regulatory protein, when combined with SAM (S-adenosylmethionine) represses the expression of the methionine regulon and of enzymes involved in SAM synthesis. This Klebsiella pneumoniae subsp. pneumoniae (strain ATCC 700721 / MGH 78578) protein is Met repressor.